Consider the following 360-residue polypeptide: DNA polymerase IV (360 aa).

The 182-residue stretch at 8-189 folds into the UmuC domain; sequence IIHVDMDCFF…LPLEKIPGVG (182 aa). 2 residues coordinate Mg(2+): aspartate 12 and aspartate 107. Glutamate 108 is an active-site residue.

Belongs to the DNA polymerase type-Y family. Monomer. It depends on Mg(2+) as a cofactor.

The protein resides in the cytoplasm. The catalysed reaction is DNA(n) + a 2'-deoxyribonucleoside 5'-triphosphate = DNA(n+1) + diphosphate. Functionally, poorly processive, error-prone DNA polymerase involved in untargeted mutagenesis. Copies undamaged DNA at stalled replication forks, which arise in vivo from mismatched or misaligned primer ends. These misaligned primers can be extended by PolIV. Exhibits no 3'-5' exonuclease (proofreading) activity. May be involved in translesional synthesis, in conjunction with the beta clamp from PolIII. This Vibrio cholerae serotype O1 (strain ATCC 39315 / El Tor Inaba N16961) protein is DNA polymerase IV.